The following is a 963-amino-acid chain: TBC1 domain family member 2B (963 aa).

The disordered stretch occupies residues 1–30; the sequence is MPGAGARAEEGGGGGEGAAQGAAAEPGAGP. A compositionally biased stretch (low complexity) spans 19 to 30; it reads AQGAAAEPGAGP. The PH domain maps to 34–139; sequence PARLCGYLQK…WLQELQQKRW (106 aa). 2 positions are modified to phosphoserine: Ser155 and Ser317. A disordered region spans residues 272 to 348; sequence EKKKLTPEGN…EMQLQVQSQQ (77 aa). Residues 318-348 show a composition bias toward low complexity; sequence GDPSSEGTSGSGSVSIRKPASEMQLQVQSQQ. The stretch at 337 to 535 forms a coiled coil; the sequence is ASEMQLQVQS…AKYSSLEAKL (199 aa). Ser473 is subject to Phosphoserine. The Rab-GAP TBC domain maps to 662 to 856; sequence GIPHEHRSKV…KIWDSFLYEG (195 aa). The residue at position 957 (Ser957) is a Phosphoserine.

It is found in the early endosome. GTPase-activating protein that plays a role in the early steps of endocytosis. In Homo sapiens (Human), this protein is TBC1 domain family member 2B (TBC1D2B).